The primary structure comprises 149 residues: UPF0178 protein Lmo1456 (149 aa).

Belongs to the UPF0178 family.

In Listeria monocytogenes serovar 1/2a (strain ATCC BAA-679 / EGD-e), this protein is UPF0178 protein Lmo1456.